Here is a 198-residue protein sequence, read N- to C-terminus: FMN-dependent NADH:quinone oxidoreductase (198 aa).

FMN is bound by residues serine 10, 16–18 (SQS), 94–97 (MYNF), and 138–141 (TRGG).

Belongs to the azoreductase type 1 family. In terms of assembly, homodimer. Requires FMN as cofactor.

It carries out the reaction 2 a quinone + NADH + H(+) = 2 a 1,4-benzosemiquinone + NAD(+). The enzyme catalyses N,N-dimethyl-1,4-phenylenediamine + anthranilate + 2 NAD(+) = 2-(4-dimethylaminophenyl)diazenylbenzoate + 2 NADH + 2 H(+). Its function is as follows. Quinone reductase that provides resistance to thiol-specific stress caused by electrophilic quinones. Also exhibits azoreductase activity. Catalyzes the reductive cleavage of the azo bond in aromatic azo compounds to the corresponding amines. This Shewanella oneidensis (strain ATCC 700550 / JCM 31522 / CIP 106686 / LMG 19005 / NCIMB 14063 / MR-1) protein is FMN-dependent NADH:quinone oxidoreductase.